We begin with the raw amino-acid sequence, 200 residues long: Thymidine kinase (200 aa).

ATP-binding positions include 15–22 (GPMYSGKS) and 88–91 (DEVQ). The Proton acceptor role is filled by E89. Residues C145, C148, C177, and C180 each contribute to the Zn(2+) site.

It belongs to the thymidine kinase family. As to quaternary structure, homotetramer.

The protein localises to the cytoplasm. The catalysed reaction is thymidine + ATP = dTMP + ADP + H(+). The protein is Thymidine kinase of Mycoplasma mobile (strain ATCC 43663 / 163K / NCTC 11711) (Mesomycoplasma mobile).